The primary structure comprises 166 residues: Cytochrome c-550 2 (166 aa).

An N-terminal signal peptide occupies residues 1-32; that stretch reads MFSRQFGRLATLALALAVAGCAGGEQSTTAEA. C71, C74, and H75 together coordinate heme c.

This sequence belongs to the cytochrome c family. PsbV subfamily. Requires heme c as cofactor.

It is found in the cell inner membrane. In terms of biological role, probable low-potential cytochrome c, might function in photosystem II (PSII). In Gloeobacter violaceus (strain ATCC 29082 / PCC 7421), this protein is Cytochrome c-550 2 (psbV2).